The chain runs to 1649 residues: Cortactin-binding protein 2 (1649 aa).

The tract at residues 1-27 (MATDSASCEPDLSRAPGDAEGATAEAA) is disordered. Over residues 15–25 (APGDAEGATAE) the composition is skewed to low complexity. A coiled-coil region spans residues 118–275 (RKMQERMSAQ…EQMKKGNDGK (158 aa)). 3 disordered regions span residues 322 to 439 (PLSV…PGLN), 451 to 476 (GNAN…PTSR), and 492 to 604 (ALSR…LPPK). Over residues 330–342 (STGSPLVSTNTKG) the composition is skewed to polar residues. Over residues 395–416 (STPSTPSGTAPAAAQTLGAAPQ) the composition is skewed to low complexity. Residues 492–503 (ALSRFTSPQAGA) are compositionally biased toward polar residues. At arginine 495 the chain carries Asymmetric dimethylarginine. 6 ANK repeats span residues 699-729 (GRPT…DINY), 733-762 (DSHS…RVDA), 766-795 (NGFT…NINH), 799-828 (GGQT…DRSI), 832-861 (DGWT…PAPG), and 901-931 (EGWT…EPER). Residues 1438-1471 (SAAWRKVNTSPRKKPGHFSSPMWNKPDLKHEGMR) are disordered. Serine 1510 carries the post-translational modification Phosphoserine. The segment at 1527-1649 (KSESDISKIA…KHEHVEKRNK (123 aa)) is disordered. Residues 1528 to 1546 (SESDISKIADSREDLRTFD) show a composition bias toward basic and acidic residues. Composition is skewed to polar residues over residues 1547–1557 (SSRTNPVTSAP), 1571–1584 (PLSS…SNSK), and 1621–1630 (NTRQLEINNN). Positions 1631-1649 (SKEENWNVDKHEHVEKRNK) are enriched in basic and acidic residues.

As to quaternary structure, interacts with CTTN/cortactin SH3 domain. Interacts with STRN, STRN4/zinedin and MOB4/phocein; this interactions mediate the association with the STRIPAK core complex and may regulate dendritic spine distribution of the STRIPAK complex in hippocampal neurons. Activation of glutamate receptors weakens the interaction with STRN and STRN4.

Its subcellular location is the cytoplasm. The protein resides in the cell cortex. It is found in the cell projection. It localises to the dendritic spine. Regulates the dendritic spine distribution of CTTN/cortactin in hippocampal neurons, and thus controls dendritic spinogenesis and dendritic spine maintenance. Associates with the striatin-interacting phosphatase and kinase (STRIPAK) core complex to regulate dendritic spine distribution of the STRIPAK complex in hippocampal neurons. The chain is Cortactin-binding protein 2 (Cttnbp2) from Rattus norvegicus (Rat).